Reading from the N-terminus, the 402-residue chain is Subtilisin-like protease 9 (402 aa).

A signal peptide spans 1 to 20 (MGFFRQLFSLSLCALSLAIP). Residues 21–120 (SKLIGLENTQ…VEVDRVVKLD (100 aa)) constitute a propeptide that is removed on maturation. An Inhibitor I9 domain is found at 36-119 (SYIVVMKSTI…YVEVDRVVKL (84 aa)). Residues 130–402 (SWGLGRISHK…RKLLYNGSGA (273 aa)) enclose the Peptidase S8 domain. Active-site charge relay system residues include D162 and H193. N254 carries an N-linked (GlcNAc...) asparagine glycan. S348 functions as the Charge relay system in the catalytic mechanism. 2 N-linked (GlcNAc...) asparagine glycosylation sites follow: N390 and N398.

The protein belongs to the peptidase S8 family.

It is found in the secreted. Its function is as follows. Secreted subtilisin-like serine protease with keratinolytic activity that contributes to pathogenicity. In Arthroderma benhamiae (strain ATCC MYA-4681 / CBS 112371) (Trichophyton mentagrophytes), this protein is Subtilisin-like protease 9 (SUB9).